The chain runs to 205 residues: Protein phosphatase inhibitor 2 (205 aa).

Residues 1-44 (MAASTASHRPIKGILKNKTSTTSSMVASAEQPRGNVDEELSKKS) are disordered. N-acetylalanine is present on Ala-2. 2 required for binding PPP1CC regions span residues 12-17 (KGILKN) and 43-55 (KSQKWDEMNILAT). Polar residues predominate over residues 17-26 (NKTSTTSSMV). A compositionally biased stretch (basic and acidic residues) spans 35 to 44 (NVDEELSKKS). Ser-44 carries the post-translational modification Phosphoserine; by ATM. Thr-73 bears the Phosphothreonine; by GSK3 mark. The residue at position 87 (Ser-87) is a Phosphoserine. A phosphothreonine mark is found at Thr-89 and Thr-92. The tract at residues 111-142 (EPKYRIQEQESSGEEDSDLSPEEREKKRQFEM) is disordered. A phosphoserine mark is found at Ser-121, Ser-122, Ser-127, and Ser-130. Positions 121–130 (SSGEEDSDLS) are enriched in acidic residues. The segment covering 131 to 142 (PEEREKKRQFEM) has biased composition (basic and acidic residues). Positions 147 to 150 (HYNE) are required for binding PPP1CC catalytic center, displacing metal ions and inhibition of PPP1CC catalytic activity. The disordered stretch occupies residues 163-205 (KDLHDDDEDEEMLETADGESMNTEESNQGSTPSDQQQNKLRSS). Residues 167 to 179 (DDDEDEEMLETAD) show a composition bias toward acidic residues. Positions 182–205 (SMNTEESNQGSTPSDQQQNKLRSS) are enriched in polar residues.

This sequence belongs to the protein phosphatase inhibitor 2 family. Heterodimer with PP1. In terms of processing, phosphorylation on Thr-73 by GSK3 activates PP1 by dissociating the PP1-PPP1R2 complex. Phosphorylation on Ser-44 by ATM activates PP1 by dissociating the PP1-PPP1R2 complex.

Inhibitor of protein-phosphatase 1. In Homo sapiens (Human), this protein is Protein phosphatase inhibitor 2 (PPP1R2).